Reading from the N-terminus, the 238-residue chain is Large ribosomal subunit protein uL2 (238 aa).

The segment at 198 to 238 (HPHGGGLHQSVSRPSTVSRNAPPGRKVGHIASRRTGRRGGA) is disordered. Polar residues predominate over residues 206-216 (QSVSRPSTVSR). Positions 223–238 (KVGHIASRRTGRRGGA) are enriched in basic residues.

It belongs to the universal ribosomal protein uL2 family. In terms of assembly, part of the 50S ribosomal subunit. Forms a bridge to the 30S subunit in the 70S ribosome.

Its function is as follows. One of the primary rRNA binding proteins. Required for association of the 30S and 50S subunits to form the 70S ribosome, for tRNA binding and peptide bond formation. It has been suggested to have peptidyltransferase activity; this is somewhat controversial. Makes several contacts with the 16S rRNA in the 70S ribosome. This chain is Large ribosomal subunit protein uL2, found in Sulfolobus acidocaldarius (strain ATCC 33909 / DSM 639 / JCM 8929 / NBRC 15157 / NCIMB 11770).